Consider the following 879-residue polypeptide: DNA mismatch repair protein MutS (879 aa).

Position 629–636 (glycine 629–serine 636) interacts with ATP. The tract at residues valine 824 to proline 845 is disordered.

The protein belongs to the DNA mismatch repair MutS family.

This protein is involved in the repair of mismatches in DNA. It is possible that it carries out the mismatch recognition step. This protein has a weak ATPase activity. This chain is DNA mismatch repair protein MutS, found in Desulfotalea psychrophila (strain LSv54 / DSM 12343).